Consider the following 447-residue polypeptide: Tubulin beta-1 chain (447 aa).

Gln-11, Glu-69, Ser-138, Gly-142, Thr-143, Gly-144, Asn-204, and Asn-226 together coordinate GTP. A Mg(2+)-binding site is contributed by Glu-69. Residues Ala-428–Asn-447 are disordered. Over residues Thr-429 to Asn-447 the composition is skewed to acidic residues.

The protein belongs to the tubulin family. As to quaternary structure, dimer of alpha and beta chains. A typical microtubule is a hollow water-filled tube with an outer diameter of 25 nm and an inner diameter of 15 nM. Alpha-beta heterodimers associate head-to-tail to form protofilaments running lengthwise along the microtubule wall with the beta-tubulin subunit facing the microtubule plus end conferring a structural polarity. Microtubules usually have 13 protofilaments but different protofilament numbers can be found in some organisms and specialized cells. It depends on Mg(2+) as a cofactor.

The protein localises to the cytoplasm. The protein resides in the cytoskeleton. Tubulin is the major constituent of microtubules, a cylinder consisting of laterally associated linear protofilaments composed of alpha- and beta-tubulin heterodimers. Microtubules grow by the addition of GTP-tubulin dimers to the microtubule end, where a stabilizing cap forms. Below the cap, tubulin dimers are in GDP-bound state, owing to GTPase activity of alpha-tubulin. In Manduca sexta (Tobacco hawkmoth), this protein is Tubulin beta-1 chain.